The sequence spans 54 residues: MASNDVRPVIKLRSTAGTGHTYVTRKNRRNDPDRMRLRKYDPVIRAHVEYREER.

This sequence belongs to the bacterial ribosomal protein bL33 family.

The sequence is that of Large ribosomal subunit protein bL33A from Saccharopolyspora erythraea (strain ATCC 11635 / DSM 40517 / JCM 4748 / NBRC 13426 / NCIMB 8594 / NRRL 2338).